Reading from the N-terminus, the 348-residue chain is Probable dual-specificity RNA methyltransferase RlmN (348 aa).

E93 serves as the catalytic Proton acceptor. Positions 99–333 (TEKRLTACLS…VSLRKSRGSD (235 aa)) constitute a Radical SAM core domain. C106 and C338 form a disulfide bridge. Residues C113, C117, and C120 each contribute to the [4Fe-4S] cluster site. S-adenosyl-L-methionine is bound by residues 160-161 (GE), S190, 219-221 (SLH), and N295. Catalysis depends on C338, which acts as the S-methylcysteine intermediate.

Belongs to the radical SAM superfamily. RlmN family. It depends on [4Fe-4S] cluster as a cofactor.

It is found in the cytoplasm. It catalyses the reaction adenosine(2503) in 23S rRNA + 2 reduced [2Fe-2S]-[ferredoxin] + 2 S-adenosyl-L-methionine = 2-methyladenosine(2503) in 23S rRNA + 5'-deoxyadenosine + L-methionine + 2 oxidized [2Fe-2S]-[ferredoxin] + S-adenosyl-L-homocysteine. The catalysed reaction is adenosine(37) in tRNA + 2 reduced [2Fe-2S]-[ferredoxin] + 2 S-adenosyl-L-methionine = 2-methyladenosine(37) in tRNA + 5'-deoxyadenosine + L-methionine + 2 oxidized [2Fe-2S]-[ferredoxin] + S-adenosyl-L-homocysteine. Its function is as follows. Specifically methylates position 2 of adenine 2503 in 23S rRNA and position 2 of adenine 37 in tRNAs. This chain is Probable dual-specificity RNA methyltransferase RlmN, found in Prochlorococcus marinus (strain MIT 9515).